Consider the following 250-residue polypeptide: NAD(P)H-hydrate epimerase (250 aa).

Residues 14–238 form the YjeF N-terminal domain; sequence AAALDVELMS…SIAEKYGIQK (225 aa). A (6S)-NADPHX-binding site is contributed by 74–78; the sequence is NNGGD. Positions 75 and 143 each coordinate K(+). (6S)-NADPHX is bound by residues 147 to 154, Tyr159, and Asp180; that span reads GFSFHGTA. A K(+)-binding site is contributed by Ser183.

Belongs to the NnrE/AIBP family. It depends on K(+) as a cofactor.

It carries out the reaction (6R)-NADHX = (6S)-NADHX. The catalysed reaction is (6R)-NADPHX = (6S)-NADPHX. Functionally, catalyzes the epimerization of the S- and R-forms of NAD(P)HX, a damaged form of NAD(P)H that is a result of enzymatic or heat-dependent hydration. This is a prerequisite for the S-specific NAD(P)H-hydrate dehydratase to allow the repair of both epimers of NAD(P)HX. The sequence is that of NAD(P)H-hydrate epimerase from Thalassiosira pseudonana (Marine diatom).